The following is a 196-amino-acid chain: Lipoprotein signal peptidase (196 aa).

Transmembrane regions (helical) follow at residues 43–63 (LMLK…GISF), 75–95 (AIFL…MICS), and 97–117 (TIGS…NLID). Catalysis depends on residues Asp-126 and Asp-144. The chain crosses the membrane as a helical span at residues 135 to 155 (YSFPVFNLADCFITLGVIILI).

This sequence belongs to the peptidase A8 family.

Its subcellular location is the cell inner membrane. It catalyses the reaction Release of signal peptides from bacterial membrane prolipoproteins. Hydrolyzes -Xaa-Yaa-Zaa-|-(S,diacylglyceryl)Cys-, in which Xaa is hydrophobic (preferably Leu), and Yaa (Ala or Ser) and Zaa (Gly or Ala) have small, neutral side chains.. The protein operates within protein modification; lipoprotein biosynthesis (signal peptide cleavage). This protein specifically catalyzes the removal of signal peptides from prolipoproteins. The sequence is that of Lipoprotein signal peptidase from Rickettsia typhi (strain ATCC VR-144 / Wilmington).